Here is a 1126-residue protein sequence, read N- to C-terminus: Ubiquitin carboxyl-terminal hydrolase 16/45 (1126 aa).

The segment covering 1 to 15 (MVKKRQADSRDHDCS) has biased composition (basic and acidic residues). Residues 1–44 (MVKKRQADSRDHDCSTDSGNEDLHHRKGLGSPGQSDGATPTTAS) are disordered. Polar residues predominate over residues 32–44 (PGQSDGATPTTAS). The UBP-type zinc-finger motif lies at 43–181 (ASCQHIKKAV…ELVKKLAQKP (139 aa)). Zn(2+) contacts are provided by C45, H47, C70, C73, C111, C114, C119, H126, H130, H139, C152, and C155. 2 stretches are compositionally biased toward low complexity: residues 215-229 (GGSF…SLAA) and 254-264 (SSGLSTSDSLT). Positions 215-264 (GGSFDDSSSRGSLAAAGGGGGVGSSRNRQVAIPMPPPEPSSGLSTSDSLT) are disordered. C315 acts as the Nucleophile in catalysis. Disordered stretches follow at residues 513–547 (KPQP…INTK), 570–762 (ASLG…SGSS), and 795–833 (EQGA…ARTK). Residues 524–539 (PELSLTSSSSSVTPST) show a composition bias toward low complexity. The span at 586–598 (QRKAKRAAKKRQK) shows a compositional bias: basic residues. Composition is skewed to low complexity over residues 599–614 (SSLN…GNEL) and 646–657 (TEDSTTSSVTTS). Residues 674–701 (APSTNNVPSSTASLTAPSKTYMDSNGNA) show a composition bias toward polar residues. Positions 705-718 (GEKRDDTPEHMDKD) are enriched in basic and acidic residues. Positions 730-762 (ATSPAPTATNSSTSTSATGNNNSVAGSGLSGSS) are enriched in low complexity. Over residues 807–816 (GEAKAIEQPE) the composition is skewed to basic and acidic residues. Residues 821–830 (QAQAMAQAQA) show a composition bias toward low complexity. The active-site Proton acceptor is the H984. Residues 1037-1089 (LKVLDDSDDFSNSSSNSSTSDESQTPATPLEEQQTQQAQQPQQPQQLEEAANV) form a disordered region. Low complexity predominate over residues 1046 to 1086 (FSNSSSNSSTSDESQTPATPLEEQQTQQAQQPQQPQQLEEA).

Belongs to the peptidase C19 family.

The enzyme catalyses Thiol-dependent hydrolysis of ester, thioester, amide, peptide and isopeptide bonds formed by the C-terminal Gly of ubiquitin (a 76-residue protein attached to proteins as an intracellular targeting signal).. Involved in the regulation of DNA damage repair. The sequence is that of Ubiquitin carboxyl-terminal hydrolase 16/45 from Drosophila melanogaster (Fruit fly).